Consider the following 191-residue polypeptide: UPF0149 protein VV2847 (191 aa).

It belongs to the UPF0149 family.

The protein is UPF0149 protein VV2847 of Vibrio vulnificus (strain YJ016).